The chain runs to 259 residues: Ras-related protein Rab-34 (259 aa).

M1 carries the N-acetylmethionine modification. GTP is bound by residues S62, V63, G64, K65, T66, D78, Y81, and T84. T66 is a Mg(2+) binding site. The Switch 1 signature appears at 71 to 89 (RFCKDTFDKNYKATIGVDF). 2 residues coordinate Mg(2+): T84 and D107. Positions 108–127 (TAGQERFKCIASTYYRGAQA) match the Switch 2 motif. G110, K167, D169, and S198 together coordinate GTP. S241 bears the Phosphoserine mark. Residues C257 and C258 are each lipidated (S-geranylgeranyl cysteine).

This sequence belongs to the small GTPase superfamily. Rab family. As to quaternary structure, interacts with RILP. The GTP-bound form interacts with REP15. Requires Mg(2+) as cofactor.

The protein resides in the cytoplasm. It is found in the golgi apparatus. Its subcellular location is the cytoplasmic vesicle. It localises to the phagosome. The protein localises to the phagosome membrane. The protein resides in the cell projection. It is found in the cilium. Its subcellular location is the cytoskeleton. It localises to the microtubule organizing center. The protein localises to the centrosome. The protein resides in the centriole. The enzyme catalyses GTP + H2O = GDP + phosphate + H(+). With respect to regulation, regulated by guanine nucleotide exchange factors (GEFs) which promote the exchange of bound GDP for free GTP. Regulated by GTPase activating proteins (GAPs) which increase the GTP hydrolysis activity. Inhibited by GDP dissociation inhibitors (GDIs). Functionally, the small GTPases Rab are key regulators of intracellular membrane trafficking, from the formation of transport vesicles to their fusion with membranes. Rabs cycle between an inactive GDP-bound form and an active GTP-bound form that is able to recruit to membranes different sets of downstream effectors directly responsible for vesicle formation, movement, tethering and fusion. RAB34 transports protein involved in the redistribution of lysosomes to the peri-Golgi region. Plays a role in the maturation of phagosomes that engulf pathogens, such as S.aureus and M.tuberculosis. Plays a role in the fusion of phagosomes with lysosomes. Involved in ciliogenesis. In particular, it is required for early steps of the intracellular cilium assembly pathway initiated by trafficking and docking of ciliary vesicles to the centrioles in the cytoplasm, followed by axoneme formation in the cytoplasm. After axoneme elongation, the centrioles migrate close to the cell surface so that ciliary vesicles can fuse with the plasma membrane to expose cilia to the extracellular space. It seems dispensable for ciliogenesis via the extracellular pathway where cilium assembly begins after migration and docking of the centriole to the plasma membrane. Also acts as a positive regulator of hedgehog signaling and regulates ciliary function. The polypeptide is Ras-related protein Rab-34 (Rattus norvegicus (Rat)).